We begin with the raw amino-acid sequence, 618 residues long: F-box/LRR-repeat protein At3g58940 (618 aa).

In terms of domain architecture, F-box spans 1-47 (MDRVSNLPEEVRCHILSFLPTKHAALTSVLSKSWLNLWKFETNLDID). LRR repeat units follow at residues 147-176 (LKLRSEHCVNWWHWDIGASLPNLKSLNIDS), 196-223 (EVHMANMEWRELDETMSSASLTKLSIHG), 224-249 (TGVEEFEHPKSISIDTPNLLYLNYSD), 282-313 (TLYLTEDTLEVLTMCCESMPVFNNLKTLGLKS), 314-339 (DEGRGWQAVPALLRNCPHLEFLIIEG), and 354-379 (CISREDKGRSLISCPVKKLEVRGFRG). Residues 587-618 (ATDSERAETSSNQEMTELGQATATYFPPREGE) are disordered. Residues 595-609 (TSSNQEMTELGQATA) show a composition bias toward polar residues.

This chain is F-box/LRR-repeat protein At3g58940, found in Arabidopsis thaliana (Mouse-ear cress).